Here is a 280-residue protein sequence, read N- to C-terminus: uncharacterized protein (280 aa).

Asn75, Asn98, Asn107, Asn143, Asn158, Asn170, Asn192, Asn207, Asn224, and Asn230 each carry an N-linked (GlcNAc...) asparagine; by host glycan. The chain crosses the membrane as a helical span at residues 235–255 (AFTYGSWGVAMLLFAAVMVLV).

It belongs to the RL11 family.

It localises to the host membrane. This is an uncharacterized protein from Human cytomegalovirus (strain Merlin) (HHV-5).